The primary structure comprises 517 residues: Ubiquitin carboxyl-terminal hydrolase 30 (517 aa).

Over 1–35 (MLSSRAEAAMTAADRAIQRFLRTGAAVRYKVMKNW) the chain is Mitochondrial intermembrane. Residues 36 to 56 (GVIGGIAAALAAGIYVIWGPI) form a helical membrane-spanning segment. The Cytoplasmic portion of the chain corresponds to 57–517 (TERKKRRKGL…HQSQECKSEE (461 aa)). Residues 68 to 502 (PGLVNLGNTC…SAYLLFYERV (435 aa)) form the USP domain. Cysteine 77 (nucleophile) is an active-site residue. Residues lysine 235 and lysine 289 each participate in a glycyl lysine isopeptide (Lys-Gly) (interchain with G-Cter in ubiquitin) cross-link. A disordered region spans residues 364–395 (SQHNPKLNKNPGPTLELQDGPGAPTPVLNQPG). Catalysis depends on histidine 452, which acts as the Proton acceptor.

It belongs to the peptidase C19 family. Post-translationally, ubiquitinated by parkin (PRKN) at Lys-235 and Lys-289, leading to its degradation. In terms of tissue distribution, expressed in skeletal muscle, pancreas, liver and kidney.

The protein resides in the mitochondrion outer membrane. It catalyses the reaction Thiol-dependent hydrolysis of ester, thioester, amide, peptide and isopeptide bonds formed by the C-terminal Gly of ubiquitin (a 76-residue protein attached to proteins as an intracellular targeting signal).. With respect to regulation, inhibited by the diterpenoid derivative 15-oxospiramilactone (S3). Functionally, deubiquitinating enzyme tethered to the mitochondrial outer membrane that acts as a key inhibitor of mitophagy by counteracting the action of parkin (PRKN): hydrolyzes ubiquitin attached by parkin on target proteins, such as RHOT1/MIRO1 and TOMM20, thereby blocking parkin's ability to drive mitophagy. Preferentially cleaves 'Lys-6'- and 'Lys-11'-linked polyubiquitin chains, 2 types of linkage that participate in mitophagic signaling. Does not cleave efficiently polyubiquitin phosphorylated at 'Ser-65'. Acts as a negative regulator of mitochondrial fusion by mediating deubiquitination of MFN1 and MFN2. In Homo sapiens (Human), this protein is Ubiquitin carboxyl-terminal hydrolase 30.